The following is a 255-amino-acid chain: Serine/threonine-protein phosphatase PP1 (255 aa).

Residues Asp2, His4, Asp30, and Asn62 each contribute to the Mn(2+) site. Residue His63 is the Proton donor of the active site. 2 residues coordinate Mn(2+): His111 and His186.

Belongs to the PPP phosphatase family. PP-1 subfamily. It depends on Mn(2+) as a cofactor.

The catalysed reaction is O-phospho-L-seryl-[protein] + H2O = L-seryl-[protein] + phosphate. The enzyme catalyses O-phospho-L-threonyl-[protein] + H2O = L-threonyl-[protein] + phosphate. The chain is Serine/threonine-protein phosphatase PP1 from Brassica napus (Rape).